The primary structure comprises 479 residues: Citrate synthase, mitochondrial (479 aa).

Residues 1 to 37 constitute a mitochondrion transit peptide; sequence MSAILSTTSKSFLSRGSTRQCQNMQKALFALLNARHY. Residues H312, H358, and D413 contribute to the active site. The residue at position 462 (S462) is a Phosphoserine.

The protein belongs to the citrate synthase family. Monomer and homodimer. Exists as an inactive monomer when phosphorylated. Homodimerization is dependent on dephosphorylation of Ser-462 by PTC7 and is required for activity. In terms of processing, phosphorylation at Ser-462. Dephosphorylated at Ser-462 by PTC7.

It localises to the mitochondrion matrix. It carries out the reaction oxaloacetate + acetyl-CoA + H2O = citrate + CoA + H(+). It functions in the pathway carbohydrate metabolism; tricarboxylic acid cycle; isocitrate from oxaloacetate: step 1/2. With respect to regulation, phosphorylation at Ser-462 inhibits catalytic activity. Dephosphorylation at Ser-462 by PTC7 enhances catalytic activity. Its function is as follows. Specific citrate synthase with catalytic activity only with acetyl-CoA. In Saccharomyces cerevisiae (strain ATCC 204508 / S288c) (Baker's yeast), this protein is Citrate synthase, mitochondrial.